The primary structure comprises 2842 residues: Adenomatous polyposis coli protein (2842 aa).

An N-acetylalanine modification is found at alanine 2. Residues 2-62 (AAASYDQLLK…GSIEDETMTS (61 aa)) adopt a coiled-coil conformation. Phosphoserine occurs at positions 105 and 109. Residues 125–260 (SRESTGYLEE…ASHEAERQLE (136 aa)) are a coiled coil. The segment at 238–304 (AEAERSSQSK…THSAPRRLTS (67 aa)) is disordered. The segment covering 239 to 259 (EAERSSQSKHETASHEAERQL) has biased composition (basic and acidic residues). Polar residues predominate over residues 268–279 (NLATSGSGQSSA). 7 ARM repeats span residues 451–493 (LMKL…HYSV), 503–545 (LTNL…IASV), 546–589 (LRNL…VLSA), 590–636 (LWNL…GGGI), 637–681 (LRNV…ACGT), 682–723 (LWNL…SAAA), and 724–765 (LRNL…LDAQ). A phosphoserine mark is found at serine 742, serine 746, and serine 778. A disordered region spans residues 828-877 (VLPSSSSSRGSLDSSRSEKDRSLERERGIGLSTYHSATENPGTSSKRGLQ). Over residues 831 to 841 (SSSSSRGSLDS) the composition is skewed to low complexity. Over residues 842-855 (SRSEKDRSLERERG) the composition is skewed to basic and acidic residues. The span at 860-877 (TYHSATENPGTSSKRGLQ) shows a compositional bias: polar residues. Phosphoserine is present on serine 906. Disordered regions lie at residues 921–942 (RRSSASHTHPNTHNFAKSESSN) and 956–988 (RSSNDSLNSVTSSDGYGKRGQMKPSVESYSEDD). Residues 931 to 942 (NTHNFAKSESSN) are compositionally biased toward polar residues. The segment covering 959-969 (NDSLNSVTSSD) has biased composition (low complexity). A phosphoserine mark is found at serine 985, serine 1036, and serine 1040. The tract at residues 1018-1167 (ELDTPINYSL…TNYSIKYNEE (150 aa)) is interaction with catenins. Disordered regions lie at residues 1058 to 1078 (IKQNEQRQSRSQNTNFPVYSE), 1092 to 1166 (GQQE…KYNE), 1188 to 1249 (SQKP…CKVP), and 1306 to 1373 (ENDV…PEHY). Polar residues-rich tracts occupy residues 1066-1078 (SRSQNTNFPVYSE) and 1103-1128 (RGTNGSETNRMGSSHAVNQNVNQSLC). Positions 1144 to 1157 (RYSEEEQHEEEERP) are enriched in basic and acidic residues. 2 stretches are compositionally biased toward low complexity: residues 1188–1200 (SQKPSFSFSKTPS) and 1209–1223 (NSPSSEAASAPSSNA). 2 stretches are compositionally biased toward polar residues: residues 1224–1242 (KRQSQLHPSSAQRNGQTPK) and 1323–1340 (VSQSTRTKPSRLQASGLA). The span at 1352–1363 (SSGAKSPSKSGA) shows a compositional bias: low complexity. Phosphoserine occurs at positions 1357, 1368, 1382, 1389, and 1392. Disordered stretches follow at residues 1398-1474 (IASS…VSAA), 1525-1568 (PPVQ…SDDD), 1584-1609 (KSSRKAKKLAQTASKLPPPVARKPSQ), and 1661-1711 (ESPP…IPDL). Threonine 1435 is subject to Phosphothreonine. Residues 1435-1444 (TPPPPPPPQP) show a composition bias toward pro residues. Positions 1532 to 1546 (NGNETEPEQPEESNE) are enriched in acidic residues. Over residues 1547–1562 (NQDKEVEKPDSEKDLL) the composition is skewed to basic and acidic residues. Serine 1565 is modified (phosphoserine). The span at 1681-1700 (EFEKRDTIPTEGRSTDEAQR) shows a compositional bias: basic and acidic residues. A Phosphoserine modification is found at serine 1714. A compositionally biased stretch (polar residues) spans 1748 to 1762 (VQQASMTSSGTNKNQ). 3 disordered regions span residues 1748 to 1950 (VQQA…EKLQ), 1963 to 2010 (RNSS…APKS), and 2043 to 2067 (SSAMPKKRRPSRLKGEGEWQSPRKV). Phosphoserine is present on serine 1772. Composition is skewed to basic and acidic residues over residues 1783–1792 (YRTRVRKNTD) and 1804–1833 (SDNKDSKKQSLKNNPKDLNDKLPDNEDRVR). Serine 1859, serine 1861, and serine 1862 each carry phosphoserine. A highly charged region spans residues 1864-1891 (DFDDDDVDLSREKAELRKGKESKDSEAK). Basic and acidic residues predominate over residues 1871 to 1894 (DLSREKAELRKGKESKDSEAKVTC). Residues 1899–1911 (SSSQQSARKAQAS) show a composition bias toward low complexity. Over residues 1927 to 1936 (EQPTFPQSSK) the composition is skewed to polar residues. Basic and acidic residues predominate over residues 1937–1949 (DVPDRGAATDEKL). Phosphoserine is present on residues serine 1969 and serine 1971. The tract at residues 2034 to 2058 (EDDLLRECISSAMPKKRRPSRLKGE) is interaction with AXIN1. Phosphoserine occurs at positions 2087, 2092, 2125, 2129, 2130, and 2132. Disordered stretches follow at residues 2148–2173 (FHLTPDQEEKPFTSHKGPRILKPGEK), 2234–2641 (PGVR…AESK), and 2664–2842 (CPIN…VTSV). Threonine 2151 is subject to Phosphothreonine. The basic region stretch occupies residues 2167–2674 (ILKPGEKSTL…PINNPRSGRS (508 aa)). 2 stretches are compositionally biased toward polar residues: residues 2257–2272 (ASKSPSEGPVATTSPR) and 2283–2347 (SPIT…QLPR). 3 positions are modified to phosphoserine: serine 2260, serine 2270, and serine 2283. Positions 2348-2369 (TSSPSTASTKSSGSGKMSYTSP) are enriched in low complexity. Composition is skewed to polar residues over residues 2370 to 2411 (GRQL…NGSN) and 2418 to 2427 (RMSSTKSSGS). The segment covering 2459–2477 (SASFESLSPSSRPDSPTRS) has biased composition (low complexity). 2 positions are modified to phosphoserine: serine 2473 and serine 2535. The interaction with DLG1 stretch occupies residues 2475–2842 (TRSQAQTPVL…HSGSYLVTSV (368 aa)). Over residues 2518–2535 (SDGRPSKRHDIARSHSES) the composition is skewed to basic and acidic residues. Over residues 2555–2568 (SSSLPRVSTWRRTG) the composition is skewed to polar residues. Phosphoserine is present on serine 2569. The span at 2569-2579 (SSSSILSASSE) shows a compositional bias: low complexity. Basic and acidic residues predominate over residues 2580–2592 (SSEKAKSEDEKHV). The span at 2629 to 2638 (TTSSGAASGA) shows a compositional bias: low complexity. 2 stretches are compositionally biased toward polar residues: residues 2668 to 2679 (NPRSGRSPTGNT) and 2702 to 2713 (GKQSVGSGSPVQ). Serine 2671 and serine 2674 each carry phosphoserine. Positions 2674–2842 (SPTGNTPPVI…HSGSYLVTSV (169 aa)) are interaction with MAPRE1. At threonine 2679 the chain carries Phosphothreonine. 2 positions are modified to phosphoserine: serine 2710 and serine 2723. Low complexity predominate over residues 2762–2773 (SSSSSSKHSSPS). Polar residues predominate over residues 2783 to 2809 (FNYNPSPRKSSADSTSARPSQIPTPVG). Serine 2788 bears the Phosphoserine mark. The Microtubule tip localization signal motif lies at 2802 to 2805 (SQIP). Positions 2840-2842 (TSV) match the PDZ-binding motif.

Belongs to the adenomatous polyposis coli (APC) family. Forms homooligomers. Found in a complex consisting of ARHGEF4, APC and CTNNB1. Found in a complex composed of MACF1, APC, AXIN1, CTNNB1 and GSK3B. The complex composed, at least, of APC, CTNNB1 and GSK3B interacts with JPT1; the interaction requires the inactive form of GSK3B (phosphorylated at 'Ser-9'). Interacts with APC2. Interacts with DLG1 (via PDZ domains) and DLG3 (via PDZ domains). Interacts with alpha- and beta-catenins. Interacts with AXIN1 (via RGS domain). Interacts with ARHGEF4 (via N-terminus). Interacts (via C-terminal residues 2674-2843) with MAPRE1 (via C-terminal residues 206-211); the interaction inhibits association with and bundling of F-actin. Interacts with MAPRE2 and MAPRE3 (via C-terminus). Interacts with DIAPH1; DIAPH1 acts as a scaffold protein for MAPRE1 and APC to stabilize microtubules and promote cell migration. Interacts with DIAPH2. Interacts with SCRIB; may mediate APC targeting to adherens junctions of epithelial cells. Interacts with SPATA13 (via N-terminus and SH3 domain). Interacts with ASAP1 (via SH3 domain). Interacts (at the cell membrane) with AMER1 and AMER2 (via ARM repeats). Interacts with KHDRBS1. Interacts with actin; binds both to F-actin and actin filament bundles. Post-translationally, phosphorylated; phosphorylation enhances the F-actin bundling activity. Phosphorylated by GSK3B. In terms of processing, ubiquitinated, leading to its degradation by the proteasome. Ubiquitination is facilitated by Axin. Deubiquitinated by ZRANB1/TRABID.

It is found in the cell junction. Its subcellular location is the adherens junction. The protein resides in the cytoplasm. The protein localises to the cytoskeleton. It localises to the cell projection. It is found in the lamellipodium. Its subcellular location is the ruffle membrane. The protein resides in the cell membrane. Functionally, tumor suppressor. Promotes rapid degradation of CTNNB1 and participates in Wnt signaling as a negative regulator. APC activity is correlated with its phosphorylation state. Activates the GEF activity of SPATA13 and ARHGEF4. Plays a role in hepatocyte growth factor (HGF)-induced cell migration. Required for MMP9 up-regulation via the JNK signaling pathway in colorectal tumor cells. Associates with both microtubules and actin filaments, components of the cytoskeleton. Plays a role in mediating the organization of F-actin into ordered bundles. Functions downstream of Rho GTPases and DIAPH1 to selectively stabilize microtubules. Acts as a mediator of ERBB2-dependent stabilization of microtubules at the cell cortex. It is required for the localization of MACF1 to the cell membrane and this localization of MACF1 is critical for its function in microtubule stabilization. The polypeptide is Adenomatous polyposis coli protein (Apc) (Rattus norvegicus (Rat)).